We begin with the raw amino-acid sequence, 101 residues long: NAD(P)H-quinone oxidoreductase subunit 4L, chloroplastic (101 aa).

3 consecutive transmembrane segments (helical) span residues 2 to 22, 32 to 52, and 61 to 81; these read MLEHILVLSAYLFSIGIYGLI, MCLELIFNSVNINFVTFSGFF, and IFSVFVFAIAAAEAAIGLAIV.

Belongs to the complex I subunit 4L family. NDH is composed of at least 16 different subunits, 5 of which are encoded in the nucleus.

The protein resides in the plastid. The protein localises to the chloroplast thylakoid membrane. It catalyses the reaction a plastoquinone + NADH + (n+1) H(+)(in) = a plastoquinol + NAD(+) + n H(+)(out). It carries out the reaction a plastoquinone + NADPH + (n+1) H(+)(in) = a plastoquinol + NADP(+) + n H(+)(out). Functionally, NDH shuttles electrons from NAD(P)H:plastoquinone, via FMN and iron-sulfur (Fe-S) centers, to quinones in the photosynthetic chain and possibly in a chloroplast respiratory chain. The immediate electron acceptor for the enzyme in this species is believed to be plastoquinone. Couples the redox reaction to proton translocation, and thus conserves the redox energy in a proton gradient. The sequence is that of NAD(P)H-quinone oxidoreductase subunit 4L, chloroplastic from Jasminum nudiflorum (Winter jasmine).